Here is a 197-residue protein sequence, read N- to C-terminus: Recombination protein RecR (197 aa).

The C4-type zinc finger occupies 56–71; that stretch reads CRLCNNFSEAEVCEVC. The region spanning 79–174 is the Toprim domain; sequence RQLAVVEMPA…KVSRLARGVP (96 aa).

It belongs to the RecR family.

Functionally, may play a role in DNA repair. It seems to be involved in an RecBC-independent recombinational process of DNA repair. It may act with RecF and RecO. The protein is Recombination protein RecR of Thiobacillus denitrificans (strain ATCC 25259 / T1).